The following is a 318-amino-acid chain: 2-oxoacid:ferredoxin oxidoreductase 1, subunit beta (318 aa).

The [4Fe-4S] cluster site is built by C18, C21, and C52. Thiamine diphosphate-binding positions include 50 to 53 (IGCS) and H69. D94 contacts Mg(2+). Residue 95 to 96 (GD) participates in thiamine diphosphate binding. Positions 122 and 124 each coordinate Mg(2+). 126 to 127 (GL) contacts thiamine diphosphate. Residue C201 coordinates [4Fe-4S] cluster.

Heterodimer composed of an alpha and a beta subunit. The cofactor is [4Fe-4S] cluster. Thiamine diphosphate serves as cofactor. Mg(2+) is required as a cofactor.

The catalysed reaction is a 2-oxocarboxylate + 2 oxidized [2Fe-2S]-[ferredoxin] + CoA = an acyl-CoA + 2 reduced [2Fe-2S]-[ferredoxin] + CO2 + H(+). In terms of biological role, catalyzes the coenzyme A-dependent oxidative decarboxylation of different 2-oxoacids such as pyruvate, 2-oxobutyrate and glyoxylate to form their CoA derivatives. This chain is 2-oxoacid:ferredoxin oxidoreductase 1, subunit beta, found in Aeropyrum pernix (strain ATCC 700893 / DSM 11879 / JCM 9820 / NBRC 100138 / K1).